We begin with the raw amino-acid sequence, 165 residues long: Glucosamine 6-phosphate N-acetyltransferase 1 (165 aa).

In terms of domain architecture, N-acetyltransferase spans 22–165 (YRIRPLELAD…EKNVQMGLYF (144 aa)). Substrate is bound by residues Ser-44, 92-95 (KFIR), and 104-106 (EDV). 114–119 (GRGLGE) provides a ligand contact to acetyl-CoA. Residue 135-136 (YK) participates in substrate binding. 149-151 (YAK) is a binding site for acetyl-CoA.

The protein belongs to the acetyltransferase family. GNA1 subfamily. In terms of assembly, homodimer. Highly expressed in the root elongation zone and at lower levels in leaves and grains.

The protein resides in the endoplasmic reticulum membrane. It carries out the reaction D-glucosamine 6-phosphate + acetyl-CoA = N-acetyl-D-glucosamine 6-phosphate + CoA + H(+). It participates in nucleotide-sugar biosynthesis; UDP-N-acetyl-alpha-D-glucosamine biosynthesis; N-acetyl-alpha-D-glucosamine 1-phosphate from alpha-D-glucosamine 6-phosphate (route I): step 1/2. Acetyltransferase involved in de novo biosynthesis of UDP-N-acetylglucosamine (UDP-GlcNAc) in roots and is required for maintaining normal root cell shape. UDP-GlcNAc is an essential metabolite that serves as an initial sugar donor for N-glycan synthesis and thus plays an important role in protein and lipid glycosylation. The sequence is that of Glucosamine 6-phosphate N-acetyltransferase 1 (GNA1) from Oryza sativa subsp. japonica (Rice).